The following is a 532-amino-acid chain: MTTKYIFVTGGVVSSLGKGITAASLGRLLKNRGMKVTIQKFDPYINVDPGTMSPYQHGEVFVTDDGAETDLDLGHYERFIDINLNKNSNVTTGKIYSSVLKKERRGDYLGGTVQVIPHVTNEIKERVFRAGRETNADVVITEIGGTVGDIESLPFLEAIRQIKSDIGVDNVMYIHCTLIPYLAAAGEMKSKPTQHSVKELRSLGIQPNVIVVRTEKPVPEEMKEKIALFCDIRKDSVIEARDADTLYEVPLDLQAQNLDEIVCDHLNLSCQEADMTEWKSLVEKVKNLSGLVKIALVGKYVALPDAYLSVAEALRHAGYAFDADINIKWVDSEDVTAENVAEQLQGVDGILVPGGFGDRGIEGKIEAIRYAREQKIPFLGICLGMQLASIEFARNVLGLEGAHSAEINPDTPHPIIDLLPEQKDVEDMGGTLRLGLYPCKLKNGTLAQSAYNDQVIYERHRHRYEFNNQYREQMEAKGFMFSGTSPDGRLVEIVELGDHPFFIASQFHPEFVSRPTRPQPLFREFIQASLRK.

Positions 1–268 (MTTKYIFVTG…DEIVCDHLNL (268 aa)) are amidoligase domain. Position 14 (Ser14) interacts with CTP. A UTP-binding site is contributed by Ser14. 15–20 (SLGKGI) provides a ligand contact to ATP. Residue Tyr55 participates in L-glutamine binding. Asp72 lines the ATP pocket. The Mg(2+) site is built by Asp72 and Glu142. Residues 149 to 151 (DIE), 189 to 194 (KSKPTQ), and Lys225 each bind CTP. Residues 189 to 194 (KSKPTQ) and Lys225 each bind UTP. An ATP-binding site is contributed by 241-243 (RDA). Positions 293–532 (KIALVGKYVA…REFIQASLRK (240 aa)) constitute a Glutamine amidotransferase type-1 domain. Gly355 contributes to the L-glutamine binding site. Catalysis depends on Cys382, which acts as the Nucleophile; for glutamine hydrolysis. L-glutamine-binding positions include 383-386 (LGMQ), Glu406, and Arg463. Active-site residues include His508 and Glu510.

Belongs to the CTP synthase family. As to quaternary structure, homotetramer.

The enzyme catalyses UTP + L-glutamine + ATP + H2O = CTP + L-glutamate + ADP + phosphate + 2 H(+). The catalysed reaction is L-glutamine + H2O = L-glutamate + NH4(+). It carries out the reaction UTP + NH4(+) + ATP = CTP + ADP + phosphate + 2 H(+). It functions in the pathway pyrimidine metabolism; CTP biosynthesis via de novo pathway; CTP from UDP: step 2/2. With respect to regulation, allosterically activated by GTP, when glutamine is the substrate; GTP has no effect on the reaction when ammonia is the substrate. The allosteric effector GTP functions by stabilizing the protein conformation that binds the tetrahedral intermediate(s) formed during glutamine hydrolysis. Inhibited by the product CTP, via allosteric rather than competitive inhibition. Functionally, catalyzes the ATP-dependent amination of UTP to CTP with either L-glutamine or ammonia as the source of nitrogen. Regulates intracellular CTP levels through interactions with the four ribonucleotide triphosphates. The polypeptide is CTP synthase (Halalkalibacterium halodurans (strain ATCC BAA-125 / DSM 18197 / FERM 7344 / JCM 9153 / C-125) (Bacillus halodurans)).